The sequence spans 145 residues: Large ribosomal subunit protein bL9 (145 aa).

The protein belongs to the bacterial ribosomal protein bL9 family.

In terms of biological role, binds to the 23S rRNA. In Ureaplasma parvum serovar 3 (strain ATCC 700970), this protein is Large ribosomal subunit protein bL9.